Reading from the N-terminus, the 1066-residue chain is MSWLRTSPLRQSLTRSGSSSGNGSSGTATTMRQRPIDAATDCDPRACYDSFCKHWQQAHEIIQHPGTPTHDDVLGVVSHLDYMVTLLLVELHHCNKVSLPSADAAPPAAPCLEYLLSENLLDKLYEWASSTGRYANAVRLEQLKLYELLVSHSRHQLLCHEPFLRPLLKILASSQGEIFPPDLEKRLVILLNQLCVVLMQNVHLLDLFFFSAQTQVQEQIQNGSLPAPKSGTTTNFIIFSLLIPYVHREGSLGHQARDALLLCMALSQKNSNIGHYIAQYSSICPLLVTGLGGLYSRLPNSIEINSIDWHRITPDDVTEIPELTLFMNALEFCNAVVQVAHEMIKQQLLDFMYQGFIVPVLGPAILQTNIDSQISAMSYLDLILRSITEPGLMRAFVKFLLDTEKFDGERILDALVERLHSPDANLCMVTMALFDTLLGLHCEDLMLELLLKYMLPGKHVPISHRHKINKIDPYLNTTEFFLELTPDVMKRARDLARPKSVQELVDPAATATTTATAPSMLLSLPSPVMSKTIGANWNYYGHYTGDSLYANVQAYLFEAHSRIAQCQRDCRKWANSYRYQKWPRQGQARATAHALELARQFFSEFGTAAPVVAAPVASEAGEKQLDSLQSIGESSGYESFKWRPADEDAEGIDVTTTTTASASDTDLEHNNNSSSISSGRRDSWRISHSSRNEILLTDLDFSEDLFAQGTVSLGPFLNAIWSKLQTFTSNSLYVNLHLTGLITRLAWYPLPLIHSLLLRSDIAITSDTPSFHQVLRMLKQQIDAELPVAENSLEIIDVARSYLIDREFRLVNARKITDNSPLHQQLQHQQQHQQLAQTNSHTQQQQQQQQQQAQQRSTYATLSAATPVQASPTSAYDPFRRSDNKRRSISRSITSMFSRRSTSSTPASNGNSASSGLSQIYAFFTGAASTLVGGSGGEGSGARGAAQDSTRGNTCETSLSTAPRQEPQTNVGSSSNSSIGSSTQTLSGTHSSSTLHGVESGLQTGNFNSEPVSLDSVASMGIIANTSGTERSRDLALCAVLLDEWLKELAAVALEQSVVLVTEQLL.

Residues 1-11 show a composition bias toward polar residues; it reads MSWLRTSPLRQ. The interval 1-35 is disordered; that stretch reads MSWLRTSPLRQSLTRSGSSSGNGSSGTATTMRQRP. Positions 12–30 are enriched in low complexity; that stretch reads SLTRSGSSSGNGSSGTATT. Position 500 is a phosphoserine (Ser500). A disordered region spans residues 651–682; it reads GIDVTTTTTASASDTDLEHNNNSSSISSGRRD. Residues 655–678 are compositionally biased toward low complexity; the sequence is TTTTTASASDTDLEHNNNSSSISS. Ser820 is subject to Phosphoserine. 2 disordered regions span residues 821-913 and 935-1007; these read PLHQ…GNSA and SGGE…TGNF. A compositionally biased stretch (low complexity) spans 822–855; it reads LHQQLQHQQQHQQLAQTNSHTQQQQQQQQQQAQQ. The segment covering 856–874 has biased composition (polar residues); the sequence is RSTYATLSAATPVQASPTS. The span at 890-913 shows a compositional bias: low complexity; sequence SRSITSMFSRRSTSSTPASNGNSA. The segment covering 947–971 has biased composition (polar residues); sequence QDSTRGNTCETSLSTAPRQEPQTNV. Residues 972–997 are compositionally biased toward low complexity; it reads GSSSNSSIGSSTQTLSGTHSSSTLHG.

Belongs to the FHIP family.

The sequence is that of FHIP family protein GI14169 from Drosophila mojavensis (Fruit fly).